The primary structure comprises 253 residues: MGKWVTIIFVLFLYAIAQQENPAEEVKKQKELLLKEMGILPGDVYAEQGRDMFNKPMGNAGKSCSSCHGQDGRYLRGAYAHMPRYYKDMDAVADLDTRIKYCMEKYMGVGNVKHDLNFKSIATYVATLSNGMKMDVKLTHPKEREMYEKGRELWYARVGKMDFSCAICHDSEAGKRVFLQTVVAVKEDKVATHWPAYRFSNDQLWTMEDRIRGCFGDMRVAPPEHFHWAVVALNLYLSYKAKGGVVRVPGFIY.

Residues 1–17 form the signal peptide; that stretch reads MGKWVTIIFVLFLYAIA. Residues 44 to 129 enclose the Cytochrome c domain; sequence VYAEQGRDMF…SIATYVATLS (86 aa). Heme c-binding residues include cysteine 64, cysteine 67, histidine 68, cysteine 102, cysteine 165, cysteine 168, and histidine 169. Arginine 210 is a substrate binding site. Cysteine 214 contacts heme c. Cysteine 214 serves as the catalytic Cysteine persulfide intermediate.

The protein belongs to the SoxA family. In terms of assembly, heterodimer of SoxA and SoxX. Heme c serves as cofactor. Cysteine persulfide at Cys-214.

Its subcellular location is the periplasm. It catalyses the reaction L-cysteinyl-[SoxY protein] + thiosulfate + 2 Fe(III)-[cytochrome c] = S-sulfosulfanyl-L-cysteinyl-[SoxY protein] + 2 Fe(II)-[cytochrome c] + 2 H(+). The enzyme catalyses S-sulfanyl-L-cysteinyl-[SoxY protein] + thiosulfate + 2 Fe(III)-[cytochrome c] = S-(2-sulfodisulfanyl)-L-cysteinyl-[SoxY protein] + 2 Fe(II)-[cytochrome c] + 2 H(+). Functionally, C-type diheme cytochrome, which is part of the SoxAX cytochrome complex involved in sulfur oxidation. The SoxAX complex catalyzes the formation of a heterodisulfide bond between the conserved cysteine residue on a sulfur carrier SoxYZ complex subunit SoxY and thiosulfate or other inorganic sulfur substrates. This leads to the liberation of two electrons, which may be transferred from the SoxAX complex to another cytochrome c that then channels them into the respiratory electron transport chain. Some electrons may be used for reductive CO(2) fixation. This Hydrogenobacter thermophilus (strain DSM 6534 / IAM 12695 / TK-6) protein is L-cysteine S-thiosulfotransferase subunit SoxA.